A 355-amino-acid chain; its full sequence is Myricetin 7/4'-O-methyltransferase 2 (355 aa).

Residue aspartate 221 coordinates S-adenosyl-L-methionine. Residue histidine 259 is the Proton acceptor of the active site.

It belongs to the class I-like SAM-binding methyltransferase superfamily. Cation-independent O-methyltransferase family. As to quaternary structure, homodimer. Mainly expressed in leaves secreting glandular trichomes types 1 and 4 and, to a lesser extent, in storage trichomes type 6.

The catalysed reaction is quercetin + S-adenosyl-L-methionine = rhamnetin + S-adenosyl-L-homocysteine + H(+). It carries out the reaction kaempferol + S-adenosyl-L-methionine = kaempferide + S-adenosyl-L-homocysteine + H(+). It catalyses the reaction myricetin + S-adenosyl-L-methionine = 7-O-methylmyricetin + S-adenosyl-L-homocysteine + H(+). The enzyme catalyses kaempferide + S-adenosyl-L-methionine = 7,4'-O-dimethylkaempferol + S-adenosyl-L-homocysteine + H(+). The catalysed reaction is isorhamnetin + S-adenosyl-L-methionine = 3',4'-O-dimethylquercetin + S-adenosyl-L-homocysteine + 2 H(+). It carries out the reaction 3',4',5,7-tetrahydroxy-3-methoxyflavone + S-adenosyl-L-methionine = 3',4',5-trihydroxy-3,7-dimethoxyflavone + S-adenosyl-L-homocysteine + H(+). It catalyses the reaction rhamnetin + S-adenosyl-L-methionine = 7,4'-O-dimethylquercetin + S-adenosyl-L-homocysteine + H(+). The enzyme catalyses syringetin + S-adenosyl-L-methionine = 7,3',5'-O-trimethylmyricetin + S-adenosyl-L-homocysteine + H(+). The catalysed reaction is 3',4',5'-O-trimethylmyricetin + S-adenosyl-L-methionine = 7,3',4',5'-O-tetramethylmyricetin + S-adenosyl-L-homocysteine. Its pathway is flavonoid metabolism. In terms of biological role, flavonoid 7/4'-O-methyltransferase involved in the biosynthesis of polymethoxylated flavonoids natural products such as myricetin derivatives, aroma compounds possessing antioxidant properties and exhibiting pharmacological activities such as anti-carcinogen, anti-viral, anti-thrombotic, anti-diabetic, anti-atherosclerotic, and anti-inflammatory effects. Catalyzes S-adenosylmethionine-dependent regioselective 7/4'-O-methylation of flavonoids; active on various hydroxylated flavonoid substrates, including myricetin, quercetin and kaempferol. Mediates the formation of 4'-methyl derivatives from kaempferol, 3'-methyl quercetin (isorhamnetin), 7-methyl quercetin (rhamnetin) and 3'-methyl myricetin, producing 4'-methyl kaempferol (kaempferide), 3',4'-dimethyl quercetin (4'-O-methyl isorhamnetin), 7,4'-dimethyl quercetin (4'-O-methyl rhamnetin, rhamnacene) and 3',4'-dimethyl myricetin, respectively. Triggers the 7-O-methylation of quercetin, myricetin, 4'-methyl kaempferol (kaempferide), 3-methyl quercetin, 3',5'-dimethyl myricetin (syringetin) and 3',4',5'-trimethyl myricetin, thus leading to production of 7-methyl quercetin (rhamnetin), 7-methyl myricetin, 7,4'-dimethyl kaempferol (7-O-methyl kaempferide), 3,7-dimethyl quercetin, 7,3',5'-trimethyl myricetin (7-O-methyl syringetin) and 7,3',4',5'-tetramethyl myricetin, respectively. The chain is Myricetin 7/4'-O-methyltransferase 2 from Solanum habrochaites (Wild tomato).